Here is a 540-residue protein sequence, read N- to C-terminus: Phosphoenolpyruvate carboxykinase (ATP) (540 aa).

R65 serves as a coordination point for substrate. K87 is modified (N6-acetyllysine). Y207 and K213 together coordinate substrate. ATP contacts are provided by residues K213, H232, and 248–256; that span reads GLSGTGKTT. Mn(2+) contacts are provided by K213 and H232. D269 provides a ligand contact to Mn(2+). ATP is bound by residues E297, R333, 449–450, and T455; that span reads RI. R333 serves as a coordination point for substrate. The residue at position 523 (K523) is an N6-acetyllysine.

It belongs to the phosphoenolpyruvate carboxykinase (ATP) family. In terms of assembly, monomer. The cofactor is Mn(2+).

The protein localises to the cytoplasm. The enzyme catalyses oxaloacetate + ATP = phosphoenolpyruvate + ADP + CO2. Its pathway is carbohydrate biosynthesis; gluconeogenesis. Involved in the gluconeogenesis. Catalyzes the conversion of oxaloacetate (OAA) to phosphoenolpyruvate (PEP) through direct phosphoryl transfer between the nucleoside triphosphate and OAA. This Escherichia coli O45:K1 (strain S88 / ExPEC) protein is Phosphoenolpyruvate carboxykinase (ATP).